We begin with the raw amino-acid sequence, 456 residues long: Enolase (456 aa).

Residue Gln-164 participates in (2R)-2-phosphoglycerate binding. Glu-207 serves as the catalytic Proton donor. 3 residues coordinate Mg(2+): Asp-244, Glu-287, and Asp-314. (2R)-2-phosphoglycerate contacts are provided by Lys-339, Arg-368, Ser-369, and Lys-390. Lys-339 serves as the catalytic Proton acceptor.

This sequence belongs to the enolase family. In terms of assembly, component of the RNA degradosome, a multiprotein complex involved in RNA processing and mRNA degradation. The cofactor is Mg(2+).

The protein resides in the cytoplasm. It localises to the secreted. The protein localises to the cell surface. It catalyses the reaction (2R)-2-phosphoglycerate = phosphoenolpyruvate + H2O. It functions in the pathway carbohydrate degradation; glycolysis; pyruvate from D-glyceraldehyde 3-phosphate: step 4/5. Catalyzes the reversible conversion of 2-phosphoglycerate (2-PG) into phosphoenolpyruvate (PEP). It is essential for the degradation of carbohydrates via glycolysis. The protein is Enolase of Francisella tularensis subsp. holarctica (strain OSU18).